Here is a 426-residue protein sequence, read N- to C-terminus: Enolase 2 (426 aa).

Residue Gln-163 participates in (2R)-2-phosphoglycerate binding. Residue Glu-205 is the Proton donor of the active site. Asp-242, Glu-285, and Asp-312 together coordinate Mg(2+). Residues Lys-337, Arg-366, Ser-367, and Lys-388 each coordinate (2R)-2-phosphoglycerate. Lys-337 serves as the catalytic Proton acceptor.

The protein belongs to the enolase family. Mg(2+) is required as a cofactor.

It localises to the cytoplasm. It is found in the secreted. The protein resides in the cell surface. It carries out the reaction (2R)-2-phosphoglycerate = phosphoenolpyruvate + H2O. Its pathway is carbohydrate degradation; glycolysis; pyruvate from D-glyceraldehyde 3-phosphate: step 4/5. Functionally, catalyzes the reversible conversion of 2-phosphoglycerate (2-PG) into phosphoenolpyruvate (PEP). It is essential for the degradation of carbohydrates via glycolysis. The protein is Enolase 2 of Methanospirillum hungatei JF-1 (strain ATCC 27890 / DSM 864 / NBRC 100397 / JF-1).